A 274-amino-acid polypeptide reads, in one-letter code: Large ribosomal subunit protein uL2cz/uL2cy (274 aa).

Disordered stretches follow at residues 1-20 (MAIH…AVDS) and 223-274 (MNPV…RRSK).

This sequence belongs to the universal ribosomal protein uL2 family. Part of the 50S ribosomal subunit.

The protein resides in the plastid. The protein localises to the chloroplast. This chain is Large ribosomal subunit protein uL2cz/uL2cy (rpl2-A), found in Eucalyptus globulus subsp. globulus (Tasmanian blue gum).